The chain runs to 188 residues: MAAAPGARLLRAACASVPFRGLDRCRLLVCGTGAGTAISPWTPSPRLHAEAGPGRPLSVSARARSSSEDKITVHFKNRDGETLTTKGKIGDSLLDVVIENNLDIDGFGACEGTLACSTCHLIFEDHIYEKLDAITDEENDMLDLAFGLTDRSRLGCQVCLTKAMDNMTVRVPEAVADVRQSVDMSKNS.

A mitochondrion-targeting transit peptide spans 1–64; it reads MAAAPGARLL…RPLSVSARAR (64 aa). Phosphoserine is present on serine 67. The 2Fe-2S ferredoxin-type domain maps to 69–175; it reads DKITVHFKNR…NMTVRVPEAV (107 aa). Lysine 70 carries the post-translational modification N6-acetyllysine; alternate. Position 70 is an N6-succinyllysine; alternate (lysine 70). 4 residues coordinate [2Fe-2S] cluster: cysteine 110, cysteine 116, cysteine 119, and cysteine 156. Lysine 162 carries the post-translational modification N6-succinyllysine. Serine 181 is modified (phosphoserine).

Belongs to the adrenodoxin/putidaredoxin family. Interacts with CYP11A1. [2Fe-2S] cluster is required as a cofactor.

The protein resides in the mitochondrion matrix. Essential for the synthesis of various steroid hormones, participates in the reduction of mitochondrial cytochrome P450 for steroidogenesis. Transfers electrons from adrenodoxin reductase to CYP11A1, a cytochrome P450 that catalyzes cholesterol side-chain cleavage. Does not form a ternary complex with adrenodoxin reductase and CYP11A1 but shuttles between the two enzymes to transfer electrons. In Mus musculus (Mouse), this protein is Adrenodoxin, mitochondrial (Fdx1).